The sequence spans 782 residues: Chondroitin proteoglycan 4 (782 aa).

A signal peptide spans 1-18 (MRLVYSLIFLLFIPFSHP). Residues asparagine 76, asparagine 208, asparagine 462, asparagine 468, asparagine 474, and asparagine 503 are each glycosylated (N-linked (GlcNAc...) asparagine). Residues 513 to 726 (ISEKSTEESS…EDQGSGNYKK (214 aa)) form a disordered region. Low complexity-rich tracts occupy residues 520 to 532 (ESSG…SGDG), 548 to 566 (SGSS…SSGE), 573 to 612 (SSGS…SSDT), 662 to 672 (FGESSGSSGES), and 688 to 722 (SGSS…QGSG). Asparagine 559 is a glycosylation site (N-linked (GlcNAc...) asparagine). The O-linked (Xyl...) (chondroitin sulfate) serine glycan is linked to serine 691. Asparagine 699 carries an N-linked (GlcNAc...) asparagine glycan. O-linked (Xyl...) (chondroitin sulfate) serine glycosylation is found at serine 701, serine 704, serine 708, serine 714, and serine 721. Asparagine 743 is a glycosylation site (N-linked (GlcNAc...) asparagine).

This Caenorhabditis elegans protein is Chondroitin proteoglycan 4.